The primary structure comprises 392 residues: Keratin, type I cuticular Ha4 (392 aa).

A head region spans residues 1–56 (MSCESCLPALSCRTSCSSRPCVPPSCHGCTLPGACNIPANVGNCNWFCEGSFNGNE). The 312-residue stretch at 56 to 367 (EKETMQFLND…SLLESEDCNL (312 aa)) folds into the IF rod domain. Residues 57-91 (KETMQFLNDRLASYMEKVRQLERENAELECRIQER) are coil 1A. Residues 92–102 (NQQQDPLVCPA) are linker 1. The segment at 103-203 (YQAYFRTIEE…HEEEVNTLRC (101 aa)) is coil 1B. Residues 204-219 (QLGDRLNVEVDAAPTV) form a linker 12 region. The interval 220–363 (DLNRVLNETR…NTYRSLLESE (144 aa)) is coil 2. Residues 364-392 (DCNLPCNPCATTNASGSCCGPCGSSKRCC) form a tail region.

Belongs to the intermediate filament family. In terms of tissue distribution, expressed in the hair root in the hair shaft cuticle and cortex.

This Mus musculus (Mouse) protein is Keratin, type I cuticular Ha4.